A 326-amino-acid polypeptide reads, in one-letter code: ELAV-like protein 1 (326 aa).

N-acetylserine is present on serine 2. Serine 2 bears the Phosphoserine mark. The RRM 1 domain maps to 20-98 (TNLIVNYLPQ…KTIKVSYARP (79 aa)). A phosphoserine mark is found at serine 100 and serine 158. An RRM 2 domain is found at 106–186 (ANLYISGLPR…EPITVKFAAN (81 aa)). Lysine 191 is covalently cross-linked (Glycyl lysine isopeptide (Lys-Gly) (interchain with G-Cter in SUMO2)). 2 positions are modified to phosphoserine: serine 197 and serine 202. The residue at position 206 (arginine 206) is an Omega-N-methylarginine. The residue at position 217 (arginine 217) is an Asymmetric dimethylarginine; by CARM1; alternate. An Omega-N-methylarginine; alternate modification is found at arginine 217. A phosphoserine mark is found at serine 221 and serine 318. The region spanning 244-322 (WCIFIYNLGQ…KILQVSFKTN (79 aa)) is the RRM 3 domain.

The protein belongs to the RRM elav family. In terms of assembly, monomer and homodimer (in vitro). Interacts with ANP32A. Interacts with ZNF385A; the interaction is indirect and mRNA-dependent and may regulate p53/TP53 expression. Identified in a mRNP complex, at least composed of DHX9, DDX3X, ELAVL1, HNRNPU, IGF2BP1, ILF3, PABPC1, PCBP2, PTBP2, STAU1, STAU2, SYNCRIP and YBX1. Interacts with AGO1 and AGO2. Interacts with IGF2BP1. Interacts with IGF2BP2 and IGF2BP3. Interacts with HNRNPL. Interacts with DHX36; this interaction occurs in a RNA-dependent manner. Interacts with ILF3; this interaction occurs in a RNA-dependent manner. Interacts with PLEKHN1. Interacts with SHFL; the interaction increases in presence of RNA. Interacts with YBX1; interaction recruits ELAVL1 on C5-methylcytosine (m5C)-containing mRNAs, thereby promoting mRNA stability. Interacts with FXR1. In terms of processing, phosphorylated by MAPKAPK2. Phosphorylated by PRKCD. Methylated at Arg-217 by CARM1 in T-cells in response to LPS challenge.

The protein resides in the cytoplasm. It is found in the nucleus. Its subcellular location is the stress granule. It localises to the P-body. Functionally, RNA-binding protein that binds to the 3'-UTR region of mRNAs and increases their stability. Involved in embryonic stem cell (ESC) differentiation: preferentially binds mRNAs that are not methylated by N6-methyladenosine (m6A), stabilizing them, promoting ESC differentiation. Has also been shown to be capable of binding to m6A-containing mRNAs and contributes to MYC stability by binding to m6A-containing MYC mRNAs. Binds to poly-U elements and AU-rich elements (AREs) in the 3'-UTR of target mRNAs. Binds avidly to the AU-rich element in FOS and IL3/interleukin-3 mRNAs. In the case of the FOS AU-rich element, binds to a core element of 27 nucleotides that contain AUUUA, AUUUUA, and AUUUUUA motifs. Binds preferentially to the 5'-UUUU[AG]UUU-3' motif in vitro. With ZNF385A, binds the 3'-UTR of p53/TP53 mRNA to control their nuclear export induced by CDKN2A. Hence, may regulate p53/TP53 expression and mediate in part the CDKN2A anti-proliferative activity. May also bind with ZNF385A the CCNB1 mRNA. Increases the stability of the leptin mRNA harboring an AU-rich element (ARE) in its 3' UTR. The protein is ELAV-like protein 1 (Elavl1) of Mus musculus (Mouse).